The sequence spans 597 residues: C4b-binding protein alpha chain (597 aa).

The signal sequence occupies residues 1-48 (MHPPKTPSGALHRKRKMAAWPFSRLWKVSDPILFQMTLIAALLPAVLG). 8 Sushi domains span residues 49 to 110 (NCGP…FCIY), 111 to 172 (KRCR…QCEI), 173 to 236 (VKCK…TCEK), 237 to 296 (ITCR…ACEP), 297 to 362 (NSCI…GCEA), 363 to 424 (LCCP…SCGD), 425 to 482 (ICNF…QCKA), and 483 to 540 (LCRK…KCEW). Cystine bridges form between C50/C96, C81/C108, C113/C154, C140/C170, C175/C217, C203/C234, C239/C281, C267/C294, C299/C348, C332/C360, C365/C409, C399/C422, C426/C468, C454/C480, C484/C525, and C511/C538. N-linked (GlcNAc...) asparagine glycosylation occurs at N221. 2 N-linked (GlcNAc...) asparagine glycosylation sites follow: N506 and N528.

In terms of assembly, disulfide-linked complex of alpha and beta chains of 3 possible sorts: a 570 kDa complex of 7 alpha chains and 1 beta chain, a 530 kDa homoheptamer of alpha chains or a 500 kDa complex of 6 alpha chains and 1 beta chain. The central body of the alpha chain homomer supports tentacles, each with the binding site for C4b at the end. As to quaternary structure, (Microbial infection) Interacts with Staphylococcus aureus protein SdrE; this interaction inhibits complement-mediated bacterial opsonization. Chylomicrons in the plasma.

It localises to the secreted. Controls the classical pathway of complement activation. It binds as a cofactor to C3b/C4b inactivator (C3bINA), which then hydrolyzes the complement fragment C4b. It also accelerates the degradation of the C4bC2a complex (C3 convertase) by dissociating the complement fragment C2a. Alpha chain binds C4b. It also interacts with anticoagulant protein S and with serum amyloid P component. The protein is C4b-binding protein alpha chain (C4BPA) of Homo sapiens (Human).